Here is a 227-residue protein sequence, read N- to C-terminus: ATP synthase F(0) complex subunit a (227 aa).

6 helical membrane-spanning segments follow: residues 14–34 (YLGIPLIAIAIALPWVLFPLP), 69–89 (WALLLASLMVFLITINMLGLL), 98–118 (QLSLNMGLAIPLWLATVIIGL), 132–152 (EGTPLPLIPVLIIIETISLFI), 179–199 (VFVLLPMMPTVAILTATVLFL), and 202–222 (LLEVAVAMIQAYVFVLLLSLY).

Belongs to the ATPase A chain family. Component of the ATP synthase complex composed at least of ATP5F1A/subunit alpha, ATP5F1B/subunit beta, ATP5MC1/subunit c (homooctomer), MT-ATP6/subunit a, MT-ATP8/subunit 8, ATP5ME/subunit e, ATP5MF/subunit f, ATP5MG/subunit g, ATP5MK/subunit k, ATP5MJ/subunit j, ATP5F1C/subunit gamma, ATP5F1D/subunit delta, ATP5F1E/subunit epsilon, ATP5PF/subunit F6, ATP5PB/subunit b, ATP5PD/subunit d, ATP5PO/subunit OSCP. ATP synthase complex consists of a soluble F(1) head domain (subunits alpha(3) and beta(3)) - the catalytic core - and a membrane F(0) domain - the membrane proton channel (subunits c, a, 8, e, f, g, k and j). These two domains are linked by a central stalk (subunits gamma, delta, and epsilon) rotating inside the F1 region and a stationary peripheral stalk (subunits F6, b, d, and OSCP). Interacts with DNAJC30; interaction is direct.

The protein localises to the mitochondrion inner membrane. It carries out the reaction H(+)(in) = H(+)(out). In terms of biological role, subunit a, of the mitochondrial membrane ATP synthase complex (F(1)F(0) ATP synthase or Complex V) that produces ATP from ADP in the presence of a proton gradient across the membrane which is generated by electron transport complexes of the respiratory chain. ATP synthase complex consist of a soluble F(1) head domain - the catalytic core - and a membrane F(1) domain - the membrane proton channel. These two domains are linked by a central stalk rotating inside the F(1) region and a stationary peripheral stalk. During catalysis, ATP synthesis in the catalytic domain of F(1) is coupled via a rotary mechanism of the central stalk subunits to proton translocation. With the subunit c (ATP5MC1), forms the proton-conducting channel in the F(0) domain, that contains two crucial half-channels (inlet and outlet) that facilitate proton movement from the mitochondrial intermembrane space (IMS) into the matrix. Protons are taken up via the inlet half-channel and released through the outlet half-channel, following a Grotthuss mechanism. The polypeptide is ATP synthase F(0) complex subunit a (Formosania lacustris (Oriental stream loach)).